An 818-amino-acid polypeptide reads, in one-letter code: Actin filament-associated protein 1-like 2 (818 aa).

Residue Y56 is modified to Phosphotyrosine. The disordered stretch occupies residues 66–163 (QNAESQGKAP…SKGKSAPYQW (98 aa)). Over residues 85–94 (EPSQHSSAPQ) the composition is skewed to polar residues. Positions 123 to 139 (YYEEAEPYDTSLNEDGE) are enriched in acidic residues. 2 PH domains span residues 175–271 (DARI…EVSG) and 353–447 (SLET…SESG). At S408 the chain carries Phosphoserine. Y413 is subject to Phosphotyrosine. S484 bears the Phosphoserine mark. Positions 513–532 (AAVEPTEEATPVADDPNERE) are disordered. Residues 652–749 (AEIKLGKNRT…VKDNLKKAEA (98 aa)) are a coiled coil. Positions 765–787 (NVSPRPKAVTPASAPDCTPVNSA) are disordered.

As to quaternary structure, interacts with SRC. Interacts with LCK when tyrosine phosphorylated. Tyrosine phosphorylated (by SRC). In terms of tissue distribution, detected in spleen and thyroid, and at lower levels in kidney, brain, lung and pancreas.

The protein localises to the cytoplasm. In terms of biological role, may play a role in a signaling cascade by enhancing the kinase activity of SRC. Contributes to SRC-regulated transcription activation. The sequence is that of Actin filament-associated protein 1-like 2 (AFAP1L2) from Homo sapiens (Human).